The primary structure comprises 592 residues: V-type ATP synthase alpha chain 1 (592 aa).

233-240 serves as a coordination point for ATP; that stretch reads GPFGSGKT.

It belongs to the ATPase alpha/beta chains family.

It carries out the reaction ATP + H2O + 4 H(+)(in) = ADP + phosphate + 5 H(+)(out). Its function is as follows. Produces ATP from ADP in the presence of a proton gradient across the membrane. The V-type alpha chain is a catalytic subunit. This chain is V-type ATP synthase alpha chain 1, found in Clostridium tetani (strain Massachusetts / E88).